A 158-amino-acid polypeptide reads, in one-letter code: Glutathione peroxidase homolog BsaA (158 aa).

Cysteine 36 is a catalytic residue.

It belongs to the glutathione peroxidase family.

The polypeptide is Glutathione peroxidase homolog BsaA (bsaA) (Staphylococcus epidermidis (strain ATCC 12228 / FDA PCI 1200)).